Consider the following 971-residue polypeptide: Translation initiation factor IF-2 (971 aa).

Basic and acidic residues predominate over residues 49–63 (HLRKSHGATDGDKRK). Disordered stretches follow at residues 49–85 (HLRK…KART) and 99–386 (RDDV…PTEP). Residues 105–114 (GAEQGQAQVA) show a composition bias toward low complexity. Residues 121–181 (ELKRREEEAR…EEEAAAKRAA (61 aa)) are compositionally biased toward basic and acidic residues. Low complexity predominate over residues 182 to 200 (AEAAAAQQAAAQQAAAEQE). The segment covering 209 to 260 (DEARAAAERAAQREAAKKAEDAAREAADKARAEQEEISKRRAAAEAEARAIR) has biased composition (basic and acidic residues). Residues 303–325 (ARPAVKKPAGAAAPATTQAPAGA) show a composition bias toward low complexity. Gly residues predominate over residues 355–368 (SSGGVDRGWRGGPK). Residues 471-640 (PRPPVVTVMG…LLQAEVLELK (170 aa)) enclose the tr-type G domain. The tract at residues 480 to 487 (GHVDHGKT) is G1. Residue 480–487 (GHVDHGKT) coordinates GTP. The tract at residues 505–509 (GITQH) is G2. Residues 526-529 (DTPG) form a G3 region. Residues 526 to 530 (DTPGH) and 580 to 583 (NKID) contribute to the GTP site. Residues 580–583 (NKID) are G4. Positions 616–618 (SAK) are G5.

Belongs to the TRAFAC class translation factor GTPase superfamily. Classic translation factor GTPase family. IF-2 subfamily.

The protein resides in the cytoplasm. In terms of biological role, one of the essential components for the initiation of protein synthesis. Protects formylmethionyl-tRNA from spontaneous hydrolysis and promotes its binding to the 30S ribosomal subunits. Also involved in the hydrolysis of GTP during the formation of the 70S ribosomal complex. In Burkholderia cenocepacia (strain ATCC BAA-245 / DSM 16553 / LMG 16656 / NCTC 13227 / J2315 / CF5610) (Burkholderia cepacia (strain J2315)), this protein is Translation initiation factor IF-2.